The following is a 235-amino-acid chain: Carboxy-S-adenosyl-L-methionine synthase (235 aa).

Residues Y35, 60 to 62, 83 to 84, N124, and R191 contribute to the S-adenosyl-L-methionine site; these read GCS and DN.

This sequence belongs to the class I-like SAM-binding methyltransferase superfamily. Cx-SAM synthase family. In terms of assembly, homodimer.

The catalysed reaction is prephenate + S-adenosyl-L-methionine = carboxy-S-adenosyl-L-methionine + 3-phenylpyruvate + H2O. Its function is as follows. Catalyzes the conversion of S-adenosyl-L-methionine (SAM) to carboxy-S-adenosyl-L-methionine (Cx-SAM). The polypeptide is Carboxy-S-adenosyl-L-methionine synthase (Campylobacter jejuni subsp. doylei (strain ATCC BAA-1458 / RM4099 / 269.97)).